Reading from the N-terminus, the 206-residue chain is Ribosomal RNA large subunit methyltransferase E (206 aa).

The S-adenosyl-L-methionine site is built by G61, W63, D81, D97, and D122. Catalysis depends on K162, which acts as the Proton acceptor.

Belongs to the class I-like SAM-binding methyltransferase superfamily. RNA methyltransferase RlmE family.

It localises to the cytoplasm. The catalysed reaction is uridine(2552) in 23S rRNA + S-adenosyl-L-methionine = 2'-O-methyluridine(2552) in 23S rRNA + S-adenosyl-L-homocysteine + H(+). Functionally, specifically methylates the uridine in position 2552 of 23S rRNA at the 2'-O position of the ribose in the fully assembled 50S ribosomal subunit. In Neisseria gonorrhoeae (strain NCCP11945), this protein is Ribosomal RNA large subunit methyltransferase E.